A 75-amino-acid chain; its full sequence is Small ribosomal subunit protein bS18 (75 aa).

Over residues 1-11 (MAAKPFFRRRK) the composition is skewed to basic residues. Residues 1–21 (MAAKPFFRRRKTDPFEGENAP) form a disordered region.

The protein belongs to the bacterial ribosomal protein bS18 family. In terms of assembly, part of the 30S ribosomal subunit. Forms a tight heterodimer with protein bS6.

Functionally, binds as a heterodimer with protein bS6 to the central domain of the 16S rRNA, where it helps stabilize the platform of the 30S subunit. The sequence is that of Small ribosomal subunit protein bS18 from Jannaschia sp. (strain CCS1).